Consider the following 254-residue polypeptide: Switch-activating protein 1 (254 aa).

Basic and acidic residues predominate over residues methionine 1–serine 10. The interval methionine 1–threonine 30 is disordered. The segment covering alanine 16 to alanine 25 has biased composition (low complexity). Phosphoserine occurs at positions 17 and 19. 4 tandem repeats follow at residues glycine 221–methionine 224, glycine 225–methionine 228, glycine 229–methionine 232, and glycine 233–methionine 236. The 4 X 4 AA tandem repeats of G-[ATV]-N-M stretch occupies residues glycine 221–methionine 236.

In terms of assembly, homodimer.

The protein localises to the nucleus. Functionally, binds to sequences required for mating-type switching. Makes a simultaneous contact with both the alpha and beta domains of the switch-activating site SAS1. Also binds to replication fork barrier 1 (RFB1) located within a 78 base pair sequence near the 3' end of the rRNA coding region. This leads to replication fork blockage. It binds the consensus sequence 5'-TA[AG]GCAGNTN[CT]AACG[AC]G-3'. Its function is as follows. Has a role in chromosome organization and integrity where it is involved in chromosome segregation. Has a role in sister chromatid cohesion and condensation. The protein is Switch-activating protein 1 (sap1) of Schizosaccharomyces pombe (strain 972 / ATCC 24843) (Fission yeast).